A 645-amino-acid chain; its full sequence is Acetyl-coenzyme A synthetase (645 aa).

Residues 190–193, Thr-309, and Asn-333 each bind CoA; that span reads RGGR. ATP-binding positions include 385–387, 409–414, Asp-498, and Arg-513; these read GEP and DTWWQT. Ser-521 is a CoA binding site. Position 524 (Arg-524) interacts with ATP. Residues Val-535, His-537, and Val-540 each contribute to the Mg(2+) site. CoA is bound at residue Arg-582. Lys-607 bears the N6-acetyllysine mark.

Belongs to the ATP-dependent AMP-binding enzyme family. Mg(2+) serves as cofactor. Post-translationally, acetylated. Deacetylation by the SIR2-homolog deacetylase activates the enzyme.

The enzyme catalyses acetate + ATP + CoA = acetyl-CoA + AMP + diphosphate. Catalyzes the conversion of acetate into acetyl-CoA (AcCoA), an essential intermediate at the junction of anabolic and catabolic pathways. AcsA undergoes a two-step reaction. In the first half reaction, AcsA combines acetate with ATP to form acetyl-adenylate (AcAMP) intermediate. In the second half reaction, it can then transfer the acetyl group from AcAMP to the sulfhydryl group of CoA, forming the product AcCoA. This is Acetyl-coenzyme A synthetase from Beijerinckia indica subsp. indica (strain ATCC 9039 / DSM 1715 / NCIMB 8712).